The sequence spans 397 residues: Tryptophan synthase beta chain (397 aa).

The residue at position 91 (Lys91) is an N6-(pyridoxal phosphate)lysine.

The protein belongs to the TrpB family. As to quaternary structure, tetramer of two alpha and two beta chains. Requires pyridoxal 5'-phosphate as cofactor.

It catalyses the reaction (1S,2R)-1-C-(indol-3-yl)glycerol 3-phosphate + L-serine = D-glyceraldehyde 3-phosphate + L-tryptophan + H2O. It functions in the pathway amino-acid biosynthesis; L-tryptophan biosynthesis; L-tryptophan from chorismate: step 5/5. In terms of biological role, the beta subunit is responsible for the synthesis of L-tryptophan from indole and L-serine. The sequence is that of Tryptophan synthase beta chain from Bacillus cereus (strain Q1).